A 2715-amino-acid polypeptide reads, in one-letter code: Cilia- and flagella-associated protein 46 (2715 aa).

TPR repeat units lie at residues 89–122 (CRAQ…AKGE), 175–208 (AELM…IKSH), 261–295 (GDIS…LLFE), 324–359 (PGKL…AQLD), 426–459 (CQVH…DSLG), 469–503 (STRL…TPKD), 807–845 (SRKF…TNGS), 936–969 (LQTL…GIKY), 1111–1144 (AALY…LPRT), and 1174–1211 (AESE…LQKP). The tract at residues 1356–1412 (SHLLLPKKEKENERSKEKEKERSKEKENERSKEKDKEKGKEEKVKEPKQSQSPAPIK) is disordered. Basic and acidic residues predominate over residues 1361 to 1403 (PKKEKENERSKEKEKERSKEKENERSKEKDKEKGKEEKVKEPK). Positions 1362 to 1401 (KKEKENERSKEKEKERSKEKENERSKEKDKEKGKEEKVKE) form a coiled coil. Residues 1639 to 1672 (AQCLLLLAQLANKEKNYGQAKKMIAQAQHLGGSE) form a TPR 11 repeat. The stretch at 1781–1810 (VDVKLERAKIKRLRAQNEKDEEQKTAYYLE) forms a coiled coil. Disordered stretches follow at residues 2000-2023 (EEEG…EHCR), 2294-2319 (AVVA…HSTV), and 2371-2399 (ETEG…KGSI). Composition is skewed to basic and acidic residues over residues 2300–2311 (GKSKGKDKERKT) and 2371–2383 (ETEG…GRSR). The segment covering 2384 to 2398 (DPKKRSLAKKGRKGS) has biased composition (basic residues). 2 TPR repeats span residues 2399–2432 (IPRT…EMLT) and 2504–2537 (VAVL…EANW). The interval 2541 to 2567 (ASPSEDEWRRGGEPRRGFSDLEGQAAA) is disordered. A compositionally biased stretch (basic and acidic residues) spans 2546 to 2559 (DEWRRGGEPRRGFS).

This sequence belongs to the CFAP46 family.

The protein localises to the cytoplasm. Its subcellular location is the cytoskeleton. The protein resides in the cilium axoneme. As part of the central apparatus of the cilium axoneme plays a role in cilium movement. The sequence is that of Cilia- and flagella-associated protein 46 from Homo sapiens (Human).